We begin with the raw amino-acid sequence, 281 residues long: Ribosomal RNA small subunit methyltransferase I (281 aa).

The protein belongs to the methyltransferase superfamily. RsmI family.

Its subcellular location is the cytoplasm. It catalyses the reaction cytidine(1402) in 16S rRNA + S-adenosyl-L-methionine = 2'-O-methylcytidine(1402) in 16S rRNA + S-adenosyl-L-homocysteine + H(+). Catalyzes the 2'-O-methylation of the ribose of cytidine 1402 (C1402) in 16S rRNA. This chain is Ribosomal RNA small subunit methyltransferase I, found in Erythrobacter litoralis (strain HTCC2594).